We begin with the raw amino-acid sequence, 807 residues long: Leucine--tRNA ligase (807 aa).

A 'HIGH' region motif is present at residues 40–51 (PYPSGQGLHVGH). Positions 575-579 (KMSKS) match the 'KMSKS' region motif. An ATP-binding site is contributed by Lys-578.

This sequence belongs to the class-I aminoacyl-tRNA synthetase family.

It localises to the cytoplasm. It carries out the reaction tRNA(Leu) + L-leucine + ATP = L-leucyl-tRNA(Leu) + AMP + diphosphate. The chain is Leucine--tRNA ligase from Latilactobacillus sakei subsp. sakei (strain 23K) (Lactobacillus sakei subsp. sakei).